The sequence spans 193 residues: Putative manganese efflux pump MntP (193 aa).

The next 6 helical transmembrane spans lie at proline 3–glycine 23, valine 37–leucine 57, alanine 66–valine 86, leucine 109–phenylalanine 131, cysteine 146–glycine 166, and isoleucine 171–glycine 191.

The protein belongs to the MntP (TC 9.B.29) family.

Its subcellular location is the cell inner membrane. Its function is as follows. Probably functions as a manganese efflux pump. The protein is Putative manganese efflux pump MntP of Xanthomonas campestris pv. campestris (strain 8004).